The chain runs to 234 residues: MAPVKISHVVSFSSQDPKYPVENLLNPDSPRRPWLGCPQDKSGQLKVELQLERAVPTGYIDVGNCGCAFLQIDVGHSSWPLDRPFITLLPATTLMSLTDSKQGKNRSGVRMFKDVDFLAPASGELWDRLRLTCSRPFTRHQSFGLAFLRVCSSLDSLDDSVVGPSALLSSVLNKIREFKTCFFSWSLKKMELEFSPLLLSINLNDLQFAADAEVSTVSNCMFISIALQSAMIIF.

This chain is Protein XNDC1N, found in Homo sapiens (Human).